The sequence spans 700 residues: MGQTVNEDSMDVKKENQEKTPQSSTSSVQRDDFHWEEYLKETGSISAPSECFRQSQIPPVNDFKVGMKLEARDPRNATSVCIATVIGITGARLRLRLDGSDNRNDFWRLVDSPDIQPVGTCEKEGDLLQPPLGYQMNTSSWPMFLLKTLNGSEMASATLFKKEPPKPPLNNFKVGMKLEAIDKKNPYLICPATIGDVKGDEVHITFDGWSGAFDYWCKYDSRDIFPAGWCRLTGDVLQPPGTSVPIVKNIAKTESSPSEASQHSMQSPQKTTLILPTQQVRRSSRIKPPGPTAVPKRSSSVKNITPRKKGPNSGKKEKPLPVICSTSAASLKSLTRDRGMLYKDVASGPCKIVMSTVCVYVNKHGNFGPHLDPKRIQQLPDHFGPGPVNVVLRRIVQACVDCALETKTVFGYLKPDNRGGEVITASFDGETHSIQLPPVNSASFALRFLENFCHSLQCDNLLSSQPFSSSRGHTHSSAEHDKNQSAKEDVTERQSTKRSPQQTVPYVVPLSPKLPKTKEYASEGEPLFAGGSAIPKEENLSEDSKSSSLNSGNYLNPACRNPMYIHTSVSQDFSRSVPGTTSSPLVGDISPKSSPHEVKFQMQRKSEAPSYIAVPDPSVLKQGFSKDPSTWSVDEVIQFMKHTDPQISGPLADLFRQHEIDGKALFLLKSDVMMKYMGLKLGPALKLCYYIEKLKEGKYS.

The interval 1–33 is disordered; the sequence is MGQTVNEDSMDVKKENQEKTPQSSTSSVQRDDF. A compositionally biased stretch (polar residues) spans 19-28; that stretch reads KTPQSSTSSV. MBT repeat units follow at residues 33-131 and 139-240; these read FHWE…LQPP and SSWP…LQPP. A compositionally biased stretch (polar residues) spans 253–281; that stretch reads TESSPSEASQHSMQSPQKTTLILPTQQVR. Disordered stretches follow at residues 253–320 and 466–550; these read TESS…EKPL and PFSS…SSLN. Residues Ser-256, Ser-261, Ser-267, Ser-299, and Ser-300 each carry the phosphoserine modification. Thr-305 is subject to Phosphothreonine. Positions 476–495 are enriched in basic and acidic residues; that stretch reads SSAEHDKNQSAKEDVTERQS. Ser-499 carries the phosphoserine modification. Thr-503 is modified (phosphothreonine). Ser-511 is subject to Phosphoserine. Residue Lys-518 forms a Glycyl lysine isopeptide (Lys-Gly) (interchain with G-Cter in SUMO2) linkage. Position 522 is a phosphoserine (Ser-522). Residues 535–545 are compositionally biased toward basic and acidic residues; that stretch reads PKEENLSEDSK. Lys-536 participates in a covalent cross-link: Glycyl lysine isopeptide (Lys-Gly) (interchain with G-Cter in SUMO2). Phosphoserine is present on residues Ser-570, Ser-583, Ser-590, and Ser-594. Residues 575–584 are compositionally biased toward polar residues; the sequence is RSVPGTTSSP. Positions 575–594 are disordered; the sequence is RSVPGTTSSPLVGDISPKSS. Glycyl lysine isopeptide (Lys-Gly) (interchain with G-Cter in SUMO2) cross-links involve residues Lys-599 and Lys-605. An SAM domain is found at 631-700; the sequence is WSVDEVIQFM…IEKLKEGKYS (70 aa).

Belongs to the SCM family. As to expression, highly expressed in placenta, thymus and testis. Detected at lower levels in brain, liver, skeletal muscle, pancreas and ovary.

The protein resides in the nucleus. Putative Polycomb group (PcG) protein. PcG proteins act by forming multiprotein complexes, which are required to maintain the transcriptionally repressive state of homeotic genes throughout development. This is Sex comb on midleg-like protein 2 (SCML2) from Homo sapiens (Human).